The sequence spans 47 residues: Capistruin (47 aa).

Residues 1–28 (MVRLLAKLLRSTIHGSNGVSLDAVSSTH) constitute a propeptide that is removed on maturation. A cross-link (isoaspartyl glycine isopeptide (Gly-Asp)) is located at residues 29-37 (GTPGFQTPD).

In terms of processing, it is assumed that the two processing enzymes CapB/CapC convert the precursor protein CapA into the mature lasso peptide capistruin. CapB is assumed to cleave the precursor protein CapA and to set an N-terminal Gly free, whose a-NH2 group acts as the nucleophile in the subsequent cyclization reaction. CapC is most likely involved in the side-chain carboxyl group activation of aspartic acid at position 9 generating the electrophile for the condensation reaction. CapD may export capistruin outside of the producing cells.

It localises to the secreted. Peptide antibiotic that functions through inhibition of the bacterial DNA-dependent RNA polymerase (RNAP). Inhibits transcription by binding in RNAP secondary channel, where it sterically blocks the folding of the trigger loop, which is essential for efficient catalysis. In contrast to MccJ25, does not restrict access of nucleotide substrates to the catalytic center and shows a non-competitive mode of inhibition. Shows activity against closely related Gram-negative Burkholderia and Pseudomonas strains. Is not active against Gram-positive bacteria. This is Capistruin from Burkholderia thailandensis (strain ATCC 700388 / DSM 13276 / CCUG 48851 / CIP 106301 / E264).